The primary structure comprises 452 residues: Probable splicing factor, arginine/serine-rich 7 (452 aa).

RRM domains are found at residues 10–91 (KILH…YPNP) and 163–240 (RTVY…HSRV). Positions 258–452 (EEAIRMGRNG…GNGDVVMASE (195 aa)) are disordered. The segment covering 259–272 (EAIRMGRNGDDRDR) has biased composition (basic and acidic residues). Positions 273-290 (RRSRSPRRRRSPSPRRRR) are enriched in basic residues. A compositionally biased stretch (basic and acidic residues) spans 291–305 (DSRDRDRDRDRDRRR). Basic residues-rich tracts occupy residues 323-335 (KRSRSRDRKRRSR), 345-360 (KRSRSRDRRRRSKSRD), and 370-382 (SKDRKRDKKRSRS). Over residues 383-421 (RSPEKRRDKEDRKTEKKENENESSLREKLLEKKAARKDS) the composition is skewed to basic and acidic residues.

It belongs to the splicing factor SR family. Extensively phosphorylated on serine residues in the RS domain.

Its subcellular location is the nucleus. The polypeptide is Probable splicing factor, arginine/serine-rich 7 (rsp-7) (Caenorhabditis elegans).